Consider the following 126-residue polypeptide: Glycine cleavage system H protein (126 aa).

The Lipoyl-binding domain maps to 21–103 (TVTIGISEHA…YEGGWIVKVK (83 aa)). An N6-lipoyllysine modification is found at K62.

This sequence belongs to the GcvH family. The glycine cleavage system is composed of four proteins: P, T, L and H. (R)-lipoate serves as cofactor.

Functionally, the glycine cleavage system catalyzes the degradation of glycine. The H protein shuttles the methylamine group of glycine from the P protein to the T protein. In Vibrio vulnificus (strain CMCP6), this protein is Glycine cleavage system H protein.